The chain runs to 237 residues: Demethylmenaquinone methyltransferase (237 aa).

S-adenosyl-L-methionine-binding positions include Thr58, Asp79, and 106–107; that span reads NA.

This sequence belongs to the class I-like SAM-binding methyltransferase superfamily. MenG/UbiE family.

The enzyme catalyses a 2-demethylmenaquinol + S-adenosyl-L-methionine = a menaquinol + S-adenosyl-L-homocysteine + H(+). Its pathway is quinol/quinone metabolism; menaquinone biosynthesis; menaquinol from 1,4-dihydroxy-2-naphthoate: step 2/2. Methyltransferase required for the conversion of demethylmenaquinol (DMKH2) to menaquinol (MKH2). This chain is Demethylmenaquinone methyltransferase, found in Listeria innocua serovar 6a (strain ATCC BAA-680 / CLIP 11262).